The sequence spans 79 residues: Cell division protein ZapB (79 aa).

Residues F6–E78 adopt a coiled-coil conformation.

It belongs to the ZapB family. Homodimer. The ends of the coiled-coil dimer bind to each other, forming polymers. Interacts with FtsZ.

It is found in the cytoplasm. Functionally, non-essential, abundant cell division factor that is required for proper Z-ring formation. It is recruited early to the divisome by direct interaction with FtsZ, stimulating Z-ring assembly and thereby promoting cell division earlier in the cell cycle. Its recruitment to the Z-ring requires functional FtsA or ZipA. The polypeptide is Cell division protein ZapB (Yersinia pseudotuberculosis serotype O:1b (strain IP 31758)).